The chain runs to 282 residues: Putative phosphoesterase 244L (282 aa).

Positions 45, 80, and 203 each coordinate a divalent metal cation.

The protein belongs to the metallophosphoesterase superfamily. IIV-6 244L family.

In Invertebrate iridescent virus 6 (IIV-6), this protein is Putative phosphoesterase 244L.